We begin with the raw amino-acid sequence, 423 residues long: UDP-N-acetylglucosamine 1-carboxyvinyltransferase 1 (423 aa).

23-24 (KN) is a phosphoenolpyruvate binding site. Position 96 (Arg96) interacts with UDP-N-acetyl-alpha-D-glucosamine. Cys120 acts as the Proton donor in catalysis. Residue Cys120 is modified to 2-(S-cysteinyl)pyruvic acid O-phosphothioketal. UDP-N-acetyl-alpha-D-glucosamine-binding positions include 125–129 (RPIDL), Asp309, and Val331.

The protein belongs to the EPSP synthase family. MurA subfamily.

The protein localises to the cytoplasm. It carries out the reaction phosphoenolpyruvate + UDP-N-acetyl-alpha-D-glucosamine = UDP-N-acetyl-3-O-(1-carboxyvinyl)-alpha-D-glucosamine + phosphate. It functions in the pathway cell wall biogenesis; peptidoglycan biosynthesis. Functionally, cell wall formation. Adds enolpyruvyl to UDP-N-acetylglucosamine. The chain is UDP-N-acetylglucosamine 1-carboxyvinyltransferase 1 from Streptococcus mutans serotype c (strain ATCC 700610 / UA159).